A 211-amino-acid polypeptide reads, in one-letter code: 3,4-dihydroxy-2-butanone 4-phosphate synthase (211 aa).

Residues 37–38, Asp-42, 150–154, and Glu-174 each bind D-ribulose 5-phosphate; these read RE and RIGHT. Residue Glu-38 coordinates Mg(2+). His-153 lines the Mg(2+) pocket.

This sequence belongs to the DHBP synthase family. As to quaternary structure, homodimer. Requires Mg(2+) as cofactor. Mn(2+) is required as a cofactor.

The enzyme catalyses D-ribulose 5-phosphate = (2S)-2-hydroxy-3-oxobutyl phosphate + formate + H(+). Its pathway is cofactor biosynthesis; riboflavin biosynthesis; 2-hydroxy-3-oxobutyl phosphate from D-ribulose 5-phosphate: step 1/1. In terms of biological role, catalyzes the conversion of D-ribulose 5-phosphate to formate and 3,4-dihydroxy-2-butanone 4-phosphate. In Buchnera aphidicola subsp. Baizongia pistaciae (strain Bp), this protein is 3,4-dihydroxy-2-butanone 4-phosphate synthase.